Here is a 92-residue protein sequence, read N- to C-terminus: Exodeoxyribonuclease 7 small subunit (92 aa).

The segment covering 71–84 (AESAGTAKSAVAAD) has biased composition (low complexity). A disordered region spans residues 71–92 (AESAGTAKSAVAADSRGAADSA).

This sequence belongs to the XseB family. As to quaternary structure, heterooligomer composed of large and small subunits.

Its subcellular location is the cytoplasm. The enzyme catalyses Exonucleolytic cleavage in either 5'- to 3'- or 3'- to 5'-direction to yield nucleoside 5'-phosphates.. Functionally, bidirectionally degrades single-stranded DNA into large acid-insoluble oligonucleotides, which are then degraded further into small acid-soluble oligonucleotides. The sequence is that of Exodeoxyribonuclease 7 small subunit from Leifsonia xyli subsp. xyli (strain CTCB07).